The following is a 440-amino-acid chain: Xylose isomerase (440 aa).

Active-site residues include His100 and Asp103. Mg(2+)-binding residues include Glu231, Glu267, His270, Asp295, Asp306, Asp308, and Asp338.

The protein belongs to the xylose isomerase family. In terms of assembly, homotetramer. The cofactor is Mg(2+).

Its subcellular location is the cytoplasm. The enzyme catalyses alpha-D-xylose = alpha-D-xylulofuranose. The protein is Xylose isomerase of Burkholderia ambifaria (strain MC40-6).